The sequence spans 194 residues: dATP triphosphohydrolase (194 aa).

Residue arginine 17 coordinates dATP. Positions 32, 71, 72, 75, 80, and 123 each coordinate Co(2+).

It belongs to the Caudovirales dATP triphosphohydrolase family. The cofactor is Co(2+).

The catalysed reaction is dATP + H2O = 2'-deoxyadenosine + triphosphate + H(+). It catalyses the reaction dADP + H2O = 2'-deoxyadenosine + diphosphate. The enzyme catalyses dAMP + H2O = 2'-deoxyadenosine + phosphate. Its function is as follows. Catalyzes the hydrolysis of dATP, dADP and dAMP into dA. This step is essential for Z-genome synthesis (containing aminoadenine instead of adenine). Specifically removes dATP and its precursor dADP from the nucleotide pool of the host, preventing the incorporation of A into the phage genome and favoring the integration of the Z-base into the viral genome. This Salmonella phage PMBT28 protein is dATP triphosphohydrolase (datZ).